A 403-amino-acid polypeptide reads, in one-letter code: Argininosuccinate synthase (403 aa).

Residue 9 to 17 (AYSGGLDTS) coordinates ATP. Tyr86 is a binding site for L-citrulline. Gly116 provides a ligand contact to ATP. L-aspartate contacts are provided by Thr118, Asn122, and Asp123. An L-citrulline-binding site is contributed by Asn122. Residues Arg126, Ser174, Glu259, and Tyr271 each coordinate L-citrulline.

It belongs to the argininosuccinate synthase family. Type 1 subfamily. Homotetramer.

The protein localises to the cytoplasm. It carries out the reaction L-citrulline + L-aspartate + ATP = 2-(N(omega)-L-arginino)succinate + AMP + diphosphate + H(+). Its pathway is amino-acid biosynthesis; L-arginine biosynthesis; L-arginine from L-ornithine and carbamoyl phosphate: step 2/3. In Ligilactobacillus salivarius (strain UCC118) (Lactobacillus salivarius), this protein is Argininosuccinate synthase.